A 166-amino-acid chain; its full sequence is Cyclic pyranopterin monophosphate synthase (166 aa).

Substrate-binding positions include 75–77 and 113–114; these read LCH and ME. D128 is a catalytic residue.

The protein belongs to the MoaC family. As to quaternary structure, homohexamer; trimer of dimers.

The enzyme catalyses (8S)-3',8-cyclo-7,8-dihydroguanosine 5'-triphosphate = cyclic pyranopterin phosphate + diphosphate. It participates in cofactor biosynthesis; molybdopterin biosynthesis. Catalyzes the conversion of (8S)-3',8-cyclo-7,8-dihydroguanosine 5'-triphosphate to cyclic pyranopterin monophosphate (cPMP). In Thermomicrobium roseum (strain ATCC 27502 / DSM 5159 / P-2), this protein is Cyclic pyranopterin monophosphate synthase.